A 626-amino-acid chain; its full sequence is Serine/threonine-protein kinase PknB (626 aa).

Topologically, residues 1–332 (MTTPSHLSDR…DRSIGSVGRW (332 aa)) are cytoplasmic. The 264-residue stretch at 11 to 274 (YELGEILGFG…TAAEMRADLV (264 aa)) folds into the Protein kinase domain. Residues 17–25 (LGFGGMSEV), lysine 40, and 93–95 (EYV) contribute to the ATP site. The active-site Proton acceptor is the aspartate 138. Residues 140 to 143 (KPAN) and aspartate 156 contribute to the ATP site. 2 residues coordinate Mg(2+): asparagine 143 and aspartate 156. A phosphoserine; by autocatalysis mark is found at serine 166 and serine 169. Residues threonine 171, threonine 173, and threonine 294 each carry the phosphothreonine; by autocatalysis modification. Serine 295 is modified (phosphoserine; by autocatalysis). The disordered stretch occupies residues 299-323 (SAAGNLSGPRTDPLPRQDLDDTDRD). A Phosphothreonine; by autocatalysis modification is found at threonine 309. Positions 311–323 (PLPRQDLDDTDRD) are enriched in basic and acidic residues. Residues 333-353 (VAVVAVLAVLTVVVTIAINTF) form a helical membrane-spanning segment. The Extracellular portion of the chain corresponds to 354-626 (GGITRDVQVP…DGIITLRFGQ (273 aa)). 4 consecutive PASTA domains span residues 356 to 422 (ITRD…NVST), 423 to 490 (GPEQ…IVGS), 491 to 557 (GPAT…QVSK), and 558 to 626 (GNQF…RFGQ).

It belongs to the protein kinase superfamily. Ser/Thr protein kinase family. As to quaternary structure, homodimer. In terms of processing, autophosphorylated. Dephosphorylated by PstP.

It is found in the cell membrane. It carries out the reaction L-seryl-[protein] + ATP = O-phospho-L-seryl-[protein] + ADP + H(+). The enzyme catalyses L-threonyl-[protein] + ATP = O-phospho-L-threonyl-[protein] + ADP + H(+). Functionally, protein kinase that regulates many aspects of mycobacterial physiology. Is a key component of a signal transduction pathway that regulates cell growth, cell shape and cell division via phosphorylation of target proteins. The protein is Serine/threonine-protein kinase PknB (pknB) of Mycobacterium bovis (strain ATCC BAA-935 / AF2122/97).